A 952-amino-acid polypeptide reads, in one-letter code: Bifunctional ent-kaurene synthase (952 aa).

Positions 328 to 331 (DVDD) match the DXDD B-type cyclization motif motif. Residues Asp-668, Glu-672, Asn-848, Asp-849, Ser-852, and Asp-856 each coordinate Mg(2+). Positions 668-672 (DEYME) match the DEXXE A-type cyclization motif motif.

Belongs to the terpene synthase family. Mg(2+) is required as a cofactor.

It carries out the reaction ent-copalyl diphosphate = ent-kaur-16-ene + diphosphate. The catalysed reaction is (2E,6E,10E)-geranylgeranyl diphosphate = ent-copalyl diphosphate. It functions in the pathway plant hormone biosynthesis; gibberellin biosynthesis. Its function is as follows. Bifunctional ent-kaurene synthase; part of the gene cluster that mediates the biosynthesis of gibberellins (GAs), diterpenoids that may provide a selective advantage during infection of the preferred host plant, rice. Gibberellins (GAs) are diterpenoids and are synthesized via the mevalonate pathway. Biosynthesis of the major metabolite GA3 (gibberellic acid) from geranylgeranyl diphosphate (GGPP) requires 13 steps. The GGPP produced by the geranylgeranyl diphosphate synthase GGS2 is converted to ent-kaurene via ent-copalyldiphosphate in a two-step cyclization reaction performed by the bifunctional ent-copalyl diphosphate synthase/ent-kaurene synthase enzyme (CPS/KS). Ent-Kaurene is metabolized to GAs by a series of oxidation reactions catalyzed by cytochrome P450 monooxygenases. Cytochrome P450 monooxygenase P450-4 is an ent-kaurene oxidase that catalyzes the three oxidation steps between ent-kaurene and ent-kaurenoic acid. The highly multifunctional cytochrome P450 monooxygenase P450-1 then catalyzes four steps involving oxidation at two carbon atoms, in the main pathway from ent-kaurenoic acid to GA14 via GA12-aldehyde as well as producing kaurenolides and fujenoic acids as by-products. The cytochrome P450 monooxygenase P450-2 then converts GA14 to GA4 by removal of C-20. GA4 is further converted to GA7 by the GA4 desaturase DES via 1,2-desaturation before cytochrome P450 monooxygenase P450-3, a 13-hydroxylase, hydroxylates GA7 to GA3, the final product of the GA-biosynthetic pathway. The chain is Bifunctional ent-kaurene synthase from Gibberella fujikuroi (strain CBS 195.34 / IMI 58289 / NRRL A-6831) (Bakanae and foot rot disease fungus).